We begin with the raw amino-acid sequence, 514 residues long: 2'-5'-oligoadenylate synthase-like protein (514 aa).

Alanine 2 is modified (N-acetylalanine). 2 Ubiquitin-like domains span residues 354–433 (IHLT…IPSE) and 434–509 (IQVF…KGEA).

The protein belongs to the 2-5A synthase family. In terms of assembly, specifically interacts with the ligand binding domain of the thyroid receptor (TR). TRIP14 does not require the presence of thyroid hormone for its interaction. Binds MBD1. In terms of tissue distribution, expressed in most tissues, with the highest levels in primary blood Leukocytes and other hematopoietic system tissues, colon, stomach and to some extent in testis.

The protein localises to the nucleus. Its subcellular location is the nucleolus. It is found in the cytoplasm. Does not have 2'-5'-OAS activity, but can bind double-stranded RNA. Displays antiviral activity against encephalomyocarditis virus (EMCV) and hepatitis C virus (HCV) via an alternative antiviral pathway independent of RNase L. The protein is 2'-5'-oligoadenylate synthase-like protein (OASL) of Homo sapiens (Human).